Consider the following 217-residue polypeptide: Large ribosomal subunit protein uL3 (217 aa).

An N5-methylglutamine modification is found at Gln154.

It belongs to the universal ribosomal protein uL3 family. Part of the 50S ribosomal subunit. Forms a cluster with proteins L14 and L19. In terms of processing, methylated by PrmB.

One of the primary rRNA binding proteins, it binds directly near the 3'-end of the 23S rRNA, where it nucleates assembly of the 50S subunit. The chain is Large ribosomal subunit protein uL3 from Burkholderia ambifaria (strain ATCC BAA-244 / DSM 16087 / CCUG 44356 / LMG 19182 / AMMD) (Burkholderia cepacia (strain AMMD)).